Here is a 698-residue protein sequence, read N- to C-terminus: Protein arginine N-methyltransferase 7 (698 aa).

SAM-dependent MTase PRMT-type domains lie at 14-357 (QNTW…YSLW) and 366-698 (EKPA…EKSE).

The protein belongs to the class I-like SAM-binding methyltransferase superfamily. Protein arginine N-methyltransferase family. PRMT7 subfamily.

Functionally, essential arginine methyltransferase that can both catalyze the formation of omega-N monomethylarginine (MMA) and symmetrical dimethylarginine (sDMA). Specifically mediates the symmetrical dimethylation of arginine residues in the small nuclear ribonucleoproteins SmD1 and SmD3. The polypeptide is Protein arginine N-methyltransferase 7 (Art7) (Drosophila mojavensis (Fruit fly)).